Here is a 605-residue protein sequence, read N- to C-terminus: DNA mismatch repair protein MutL (605 aa).

Belongs to the DNA mismatch repair MutL/HexB family.

Its function is as follows. This protein is involved in the repair of mismatches in DNA. It is required for dam-dependent methyl-directed DNA mismatch repair. May act as a 'molecular matchmaker', a protein that promotes the formation of a stable complex between two or more DNA-binding proteins in an ATP-dependent manner without itself being part of a final effector complex. This chain is DNA mismatch repair protein MutL, found in Pelotomaculum thermopropionicum (strain DSM 13744 / JCM 10971 / SI).